The following is a 185-amino-acid chain: MKCIVGLGNPGKKFEMTRHNVGFLAIDRLAEKHGISLNEAKFNALMGTGRINGERVVLVKPLTYMNLSGEAVRPILDYYKIEIDDLLVIYDDLDMVPGKLRFRPKGSAGGHNGIKSLIQHLGTAEFKRLKLGIGRPPHPIKVVDWVLMNYRKDELPELNETLDNAVTAATDFVDTDWLALMNRYN.

Position 14 (Phe-14) interacts with tRNA. Catalysis depends on His-19, which acts as the Proton acceptor. The tRNA site is built by Tyr-64, Asn-66, and Asn-112.

It belongs to the PTH family. In terms of assembly, monomer.

Its subcellular location is the cytoplasm. It catalyses the reaction an N-acyl-L-alpha-aminoacyl-tRNA + H2O = an N-acyl-L-amino acid + a tRNA + H(+). Hydrolyzes ribosome-free peptidyl-tRNAs (with 1 or more amino acids incorporated), which drop off the ribosome during protein synthesis, or as a result of ribosome stalling. In terms of biological role, catalyzes the release of premature peptidyl moieties from peptidyl-tRNA molecules trapped in stalled 50S ribosomal subunits, and thus maintains levels of free tRNAs and 50S ribosomes. The chain is Peptidyl-tRNA hydrolase from Exiguobacterium sp. (strain ATCC BAA-1283 / AT1b).